Consider the following 821-residue polypeptide: Pentatricopeptide repeat-containing protein At4g04790, mitochondrial (821 aa).

A mitochondrion-targeting transit peptide spans 1-74; sequence MVVSKVNKSL…KLLHVTTSDK (74 aa). 7 PPR repeats span residues 372–406, 407–441, 442–476, 477–511, 512–542, 544–574, and 578–612; these read SSTS…GLMI, SADI…SVKP, NTEN…NLEP, NSSM…GVKP, DSIT…AGVQ, TKRI…PDVP, and QNEL…ECHV. Residues 801–821 form a disordered region; the sequence is AFSQAPNKKKPKKKMIVLSTK.

The protein belongs to the PPR family. P subfamily.

It localises to the mitochondrion. In Arabidopsis thaliana (Mouse-ear cress), this protein is Pentatricopeptide repeat-containing protein At4g04790, mitochondrial.